Here is a 497-residue protein sequence, read N- to C-terminus: Carboxylesterase (497 aa).

Residue serine 185 is the Acyl-ester intermediate of the active site. Catalysis depends on charge relay system residues glutamate 319 and histidine 415.

Belongs to the type-B carboxylesterase/lipase family.

Its subcellular location is the secreted. It carries out the reaction a carboxylic ester + H2O = an alcohol + a carboxylate + H(+). This is Carboxylesterase from Thermobifida fusca (Thermomonospora fusca).